The primary structure comprises 268 residues: Tryptophan synthase alpha chain (268 aa).

Active-site proton acceptor residues include glutamate 49 and aspartate 60.

This sequence belongs to the TrpA family. As to quaternary structure, tetramer of two alpha and two beta chains.

The catalysed reaction is (1S,2R)-1-C-(indol-3-yl)glycerol 3-phosphate + L-serine = D-glyceraldehyde 3-phosphate + L-tryptophan + H2O. The protein operates within amino-acid biosynthesis; L-tryptophan biosynthesis; L-tryptophan from chorismate: step 5/5. Its function is as follows. The alpha subunit is responsible for the aldol cleavage of indoleglycerol phosphate to indole and glyceraldehyde 3-phosphate. The protein is Tryptophan synthase alpha chain of Salmonella choleraesuis (strain SC-B67).